The primary structure comprises 251 residues: MKIVLLYYFVNMFISGIFQIANVEVGQHFYWSILGFQIHGQVLINSWIVILIIGFLSIYTTKNLTLVPANKQIFIELVTEFITDISKTQIGEKEYSKWVPYIGTMFLFIFVSNWSGALIPWKIIELPNGELGAPTNDINTTAGLAILTSLAYFYAGLNKKGLTYFKKYVQPTPILLPINILEDFTKPLSLSFRLFGNILADELVVAVLVSLVPLIVPVPLIFLGLFTSGIQALIFATLSGSYIGEAMEGHH.

6 helical membrane passes run 3 to 23, 38 to 58, 99 to 119, 138 to 158, 203 to 223, and 224 to 244; these read IVLL…IANV, IHGQ…FLSI, VPYI…GALI, INTT…AGLN, LVVA…LIFL, and GLFT…SYIG.

It belongs to the ATPase A chain family. F-type ATPases have 2 components, CF(1) - the catalytic core - and CF(0) - the membrane proton channel. CF(1) has five subunits: alpha(3), beta(3), gamma(1), delta(1), epsilon(1). CF(0) has four main subunits: a, b, b' and c.

It localises to the plastid. The protein resides in the chloroplast thylakoid membrane. Key component of the proton channel; it plays a direct role in the translocation of protons across the membrane. This chain is ATP synthase subunit a, chloroplastic, found in Euglena gracilis.